The chain runs to 425 residues: Glutamyl-tRNA reductase (425 aa).

Substrate-binding positions include 47–50 (TCNR), S107, 112–114 (EDQ), and Q118. The active-site Nucleophile is the C48. 187-192 (GAGHIA) contributes to the NADP(+) binding site.

It belongs to the glutamyl-tRNA reductase family. As to quaternary structure, homodimer.

It catalyses the reaction (S)-4-amino-5-oxopentanoate + tRNA(Glu) + NADP(+) = L-glutamyl-tRNA(Glu) + NADPH + H(+). It participates in porphyrin-containing compound metabolism; protoporphyrin-IX biosynthesis; 5-aminolevulinate from L-glutamyl-tRNA(Glu): step 1/2. It functions in the pathway porphyrin-containing compound metabolism; chlorophyll biosynthesis. Catalyzes the NADPH-dependent reduction of glutamyl-tRNA(Glu) to glutamate 1-semialdehyde (GSA). The polypeptide is Glutamyl-tRNA reductase (Roseiflexus sp. (strain RS-1)).